A 225-amino-acid polypeptide reads, in one-letter code: Protein-L-isoaspartate O-methyltransferase (225 aa).

The active site involves Ser-75.

This sequence belongs to the methyltransferase superfamily. L-isoaspartyl/D-aspartyl protein methyltransferase family.

The protein resides in the cytoplasm. The enzyme catalyses [protein]-L-isoaspartate + S-adenosyl-L-methionine = [protein]-L-isoaspartate alpha-methyl ester + S-adenosyl-L-homocysteine. In terms of biological role, catalyzes the methyl esterification of L-isoaspartyl residues in peptides and proteins that result from spontaneous decomposition of normal L-aspartyl and L-asparaginyl residues. It plays a role in the repair and/or degradation of damaged proteins. The sequence is that of Protein-L-isoaspartate O-methyltransferase from Stenotrophomonas maltophilia (strain K279a).